Consider the following 425-residue polypeptide: Enolase (425 aa).

Q162 is a binding site for (2R)-2-phosphoglycerate. The active-site Proton donor is the E204. 3 residues coordinate Mg(2+): D241, E282, and D309. (2R)-2-phosphoglycerate contacts are provided by K334, R363, S364, and K385. The Proton acceptor role is filled by K334.

The protein belongs to the enolase family. Mg(2+) serves as cofactor.

Its subcellular location is the cytoplasm. The protein localises to the secreted. It localises to the cell surface. The enzyme catalyses (2R)-2-phosphoglycerate = phosphoenolpyruvate + H2O. Its pathway is carbohydrate degradation; glycolysis; pyruvate from D-glyceraldehyde 3-phosphate: step 4/5. In terms of biological role, catalyzes the reversible conversion of 2-phosphoglycerate (2-PG) into phosphoenolpyruvate (PEP). It is essential for the degradation of carbohydrates via glycolysis. The polypeptide is Enolase (Corynebacterium efficiens (strain DSM 44549 / YS-314 / AJ 12310 / JCM 11189 / NBRC 100395)).